Here is a 1998-residue protein sequence, read N- to C-terminus: Histone acetyltransferase KAT6A (1998 aa).

One can recognise an SAMD1-like winged helix (WH) domain in the interval 1–77; it reads MVKLANPLYT…LNSYKDPDNP (77 aa). The interval 1–144 is required for activation of RUNX1-1; it reads MVKLANPLYT…CGGTAASGFH (144 aa). The tract at residues 52 to 166 is required for nuclear localization; it reads ELSVKDGTIL…HGRLLKDGPL (115 aa). The tract at residues 72–93 is disordered; it reads KDPDNPGRIALPKPRNHGKLDN. The H15 domain maps to 95 to 171; that stretch reads QSVDWNKLLK…KDGPLYRLNT (77 aa). Residues 144–662 are interaction with PML; the sequence is HQQLRLAIKR…RKGYGRFLID (519 aa). Lysine 172 is modified (N6-acetyllysine). 2 PHD-type zinc fingers span residues 199–258 and 255–306; these read DKPV…LRWQ and LRWQ…GMWI. Residues 312–662 are interaction with RUNX1-1; the sequence is PRKKGRKLLQ…RKGYGRFLID (351 aa). Positions 336–377 are disordered; sequence GRPKNRLKKQSTVSKGPFSKVRTGPGRGRKRKITVSSQSASS. N6-acetyllysine occurs at positions 350 and 355. Position 369 is a phosphothreonine; by PKB/AKT1 (threonine 369). Serine 419 is subject to Phosphoserine. Positions 440 to 464 are disordered; it reads KGNRKSSTSHWPTDNQDGWESKQES. Positions 444–457 are enriched in polar residues; sequence KSSTSHWPTDNQDG. A Phosphoserine modification is found at serine 471. Positions 486-776 are catalytic; it reads IQEQALQKVG…VDPECLRWTP (291 aa). Residues 502–776 enclose the MYST-type HAT domain; the sequence is PQVRCPSVIE…VDPECLRWTP (275 aa). The tract at residues 505-808 is mediates interaction with BRPF1, required for histone H3 acetyltransferase activity; the sequence is RCPSVIEFGK…EPQGQERELE (304 aa). A C2HC MYST-type zinc finger spans residues 535–560; that stretch reads LYLCEFCLKYMKSRTILQQHMKKCGW. Lysine 602 is subject to N6-acetyllysine; by autocatalysis. Residues 643 to 647 and 652 to 658 each bind acetyl-CoA; these read SCIMI and QRKGYGR. Glutamate 678 functions as the Proton donor/acceptor in the catalytic mechanism. Serine 682 contributes to the acetyl-CoA binding site. Residues 783–947 form a disordered region; that stretch reads VVSEEEDEEA…RFSESADLWR (165 aa). At serine 785 the chain carries Phosphoserine. A compositionally biased stretch (acidic residues) spans 785–797; sequence SEEEDEEADDGEK. Positions 798–840 are enriched in basic and acidic residues; that stretch reads EEPQGQERELETRERVGKSVSRENKDQDSSSLIESEKKPEVKE. At lysine 815 the chain carries N6-acetyllysine. Residue lysine 835 forms a Glycyl lysine isopeptide (Lys-Gly) (interchain with G-Cter in SUMO2) linkage. The span at 865–874 shows a compositional bias: basic residues; sequence RRGRCGRKNR. Residues 875–886 are compositionally biased toward basic and acidic residues; the sequence is KTQERFGDKDSK. Tyrosine 900 bears the Phosphotyrosine mark. Positions 903–916 are enriched in basic and acidic residues; that stretch reads CEEKSAASRERYTE. Serine 940 and serine 953 each carry phosphoserine. The segment at 982–1079 is disordered; that stretch reads GFSESSEEEE…EEEEDENELF (98 aa). Position 1006 is an N6-acetyllysine (lysine 1006). Residues 1008–1029 are compositionally biased toward basic residues; the sequence is TLKRKKPILHRRRRVRKRKHHN. Residues 1030–1041 are compositionally biased toward low complexity; that stretch reads SSVVTETISETT. 2 stretches are compositionally biased toward acidic residues: residues 1042 to 1052 and 1064 to 1077; these read EVLDEPFEDSD and FEIE…DENE. 3 positions are modified to phosphoserine: serine 1088, serine 1089, and serine 1114. Disordered regions lie at residues 1096-1175, 1195-1436, 1450-1567, and 1630-1702; these read QASS…PGFK, PIKP…EGAY, QSYT…STMG, and TCVV…CSMN. The span at 1106 to 1119 shows a compositional bias: acidic residues; it reads DEEEEEEESDDADD. Residues 1135-1146 show a composition bias toward polar residues; that stretch reads NSASLEPDTSTP. Basic residues predominate over residues 1147–1173; the sequence is MKKKKGWPKGKSRKPIHWKKRPGRKPG. The span at 1203 to 1228 shows a compositional bias: basic and acidic residues; sequence RTQESEELVEVKEGLVEERKEEMHTE. Acidic residues-rich tracts occupy residues 1229-1240 and 1281-1298; these read ADEEAEEEEDAA and EEPQ…DEVT. Composition is skewed to basic and acidic residues over residues 1316-1333, 1351-1360, and 1392-1413; these read HLDS…ARED, DSRENAKDKD, and DSNT…HSEL. The span at 1472–1496 shows a compositional bias: low complexity; it reads HNSPISSIPSHPSQSVRSVSSPSMP. Positions 1501-1522 are enriched in polar residues; that stretch reads GYTQISPEQGSLSAPSMQNMET. The interval 1510–1635 is interaction with RUNX1-2; the sequence is GSLSAPSMQN…KSPQTCVVER (126 aa). Residues 1510–1735 are interaction with PML; the sequence is GSLSAPSMQN…YERIPGDFGA (226 aa). Residues 1527–1541 are compositionally biased toward low complexity; it reads DVPSVSDHSQQVVDS. The span at 1549–1567 shows a compositional bias: polar residues; it reads IESTTENYENPSSYDSTMG. Pro residues-rich tracts occupy residues 1639 to 1658 and 1665 to 1693; these read NQQP…PQPQ and PQPP…PQQQ. Residues 1907–1942 form a required for activation of RUNX1-2 region; sequence SMNMNTLNAMNSYRMTQPMMNSSYHSNPAYMNQTAQ.

The protein belongs to the MYST (SAS/MOZ) family. As to quaternary structure, component of the MOZ/MORF complex composed at least of ING5, KAT6A, KAT6B, MEAF6 and one of BRPF1, BRD1/BRPF2 and BRPF3. Interacts with RUNX1; phosphorylation of RUNX1 enhances the interaction. Interacts with RUNX2. Interacts with p53/TP53. Interacts with PML and this interaction positively regulates its acetylation activity towards p53/TP53. In terms of processing, autoacetylated. Autoacetylation at Lys-602 is required for proper function. Post-translationally, phosphorylation at Thr-369 by PKB/AKT1 inhibits its interaction with PML and negatively regulates its acetylation activity towards p53/TP53.

The protein resides in the nucleus. Its subcellular location is the nucleolus. The protein localises to the nucleoplasm. It localises to the PML body. It catalyses the reaction L-lysyl-[protein] + acetyl-CoA = N(6)-acetyl-L-lysyl-[protein] + CoA + H(+). Its function is as follows. Histone acetyltransferase that acetylates lysine residues in histone H3 and histone H4 (in vitro). Component of the MOZ/MORF complex which has a histone H3 acetyltransferase activity. May act as a transcriptional coactivator for RUNX1 and RUNX2. Acetylates p53/TP53 at 'Lys-120' and 'Lys-382' and controls its transcriptional activity via association with PML. The protein is Histone acetyltransferase KAT6A (Kat6a) of Rattus norvegicus (Rat).